The sequence spans 478 residues: Ankyrin repeat and BTB/POZ domain-containing protein 1 (478 aa).

2 ANK repeats span residues Met1–Val31 and Trp35–Ala64. 2 consecutive BTB domains span residues Ser115 to Val182 and Pro272 to Pro346. Residues Thr450–Cys478 adopt a coiled-coil conformation.

Its subcellular location is the cytoplasm. May act as a mediator of the PTEN growth-suppressive signaling pathway. May play a role in developmental processes. The polypeptide is Ankyrin repeat and BTB/POZ domain-containing protein 1 (Rattus norvegicus (Rat)).